A 208-amino-acid chain; its full sequence is Glycerol-3-phosphate acyltransferase (208 aa).

A run of 6 helical transmembrane segments spans residues 7–27, 63–83, 86–106, 123–143, 149–169, and 170–190; these read PNIHFYLLAYFIGGIPFGYLL, MMAALTMLLDALKGALVILVA, AGMSVETQWAIAVLAVVGHCF, GVMAVMLPLEAAIGLVVWLVV, ISSLSSLLGLGALLISSFLIH, and PEIPEIGTHAPLLIIAFVIFY.

The protein belongs to the PlsY family. As to quaternary structure, probably interacts with PlsX.

Its subcellular location is the cell inner membrane. The enzyme catalyses an acyl phosphate + sn-glycerol 3-phosphate = a 1-acyl-sn-glycero-3-phosphate + phosphate. It participates in lipid metabolism; phospholipid metabolism. Catalyzes the transfer of an acyl group from acyl-phosphate (acyl-PO(4)) to glycerol-3-phosphate (G3P) to form lysophosphatidic acid (LPA). This enzyme utilizes acyl-phosphate as fatty acyl donor, but not acyl-CoA or acyl-ACP. The polypeptide is Glycerol-3-phosphate acyltransferase (Wolinella succinogenes (strain ATCC 29543 / DSM 1740 / CCUG 13145 / JCM 31913 / LMG 7466 / NCTC 11488 / FDC 602W) (Vibrio succinogenes)).